Here is a 453-residue protein sequence, read N- to C-terminus: O-methyltransferase bik3 (453 aa).

Residues 1–25 (MVSNGISNGTNGTNGTTTNGTNGVN) are disordered. Over residues 8–25 (NGTNGTNGTTTNGTNGVN) the composition is skewed to low complexity. Asp-305 is an S-adenosyl-L-methionine binding site. The Proton acceptor role is filled by His-355.

The protein belongs to the class I-like SAM-binding methyltransferase superfamily. Cation-independent O-methyltransferase family. COMT subfamily.

It functions in the pathway secondary metabolite biosynthesis. In terms of biological role, O-methyltransferase; part of the gene cluster that mediates the biosynthesis of bikaverin, a red pigment also considered as a mycotoxin. The first stage is catalyzed by the polyketide synthase bik1, which catalyzes the formation of the intermediate SMA76a also knowm as pre-bikaverin. FAD-dependent monooxygenase bik2 might then be responsible for the oxidation of pre-bikaverin to oxo-pre-bikaverin which is in turn methylated by the O-methyltransferase bik3 to me-oxo-pre-bikaverin. A further cycle of oxydation and methylation by bik2 and bik3 leads to the final product of bikaverin, via a nor-bikaverin intermediate. The sequence is that of O-methyltransferase bik3 from Gibberella fujikuroi (strain CBS 195.34 / IMI 58289 / NRRL A-6831) (Bakanae and foot rot disease fungus).